The primary structure comprises 498 residues: Zinc finger protein 682 (498 aa).

One can recognise a KRAB domain in the interval 4-75; it reads LTFRDVTIEF…KRHETIAKPP (72 aa). 10 C2H2-type zinc fingers span residues 173-195, 201-223, 229-251, 257-279, 285-307, 313-335, 341-363, 369-391, 397-419, and 425-447; these read FKCM…KIIH, CICE…KRIH, YKCE…KRIH, YKCE…KKIH, YTCE…KTIH, YKCK…ERTH, YKCE…KVIH, and YNCE…KKIH. Residues 453 to 475 form a C2H2-type 11; degenerate zinc finger; the sequence is YKCEECGKAFKRCSHLNEHKRVQ.

Belongs to the krueppel C2H2-type zinc-finger protein family.

The protein localises to the nucleus. Its function is as follows. May be involved in transcriptional regulation. In Homo sapiens (Human), this protein is Zinc finger protein 682 (ZNF682).